The primary structure comprises 168 residues: uncharacterized protein (168 aa).

The helical transmembrane segment at 23 to 47 threads the bilayer; it reads LFARASIIGVALLLSACATVPMASV.

The protein resides in the membrane. This is an uncharacterized protein from Haemophilus influenzae (strain ATCC 51907 / DSM 11121 / KW20 / Rd).